We begin with the raw amino-acid sequence, 634 residues long: DNA-directed RNA polymerase subunit gamma (634 aa).

Residues C74, C76, C89, and C92 each contribute to the Zn(2+) site. Residues D471, D473, and D475 each contribute to the Mg(2+) site.

This sequence belongs to the RNA polymerase beta' chain family. RpoC1 subfamily. As to quaternary structure, in cyanobacteria the RNAP catalytic core is composed of 2 alpha, 1 beta, 1 beta', 1 gamma and 1 omega subunit. When a sigma factor is associated with the core the holoenzyme is formed, which can initiate transcription. Mg(2+) serves as cofactor. The cofactor is Zn(2+).

It catalyses the reaction RNA(n) + a ribonucleoside 5'-triphosphate = RNA(n+1) + diphosphate. DNA-dependent RNA polymerase catalyzes the transcription of DNA into RNA using the four ribonucleoside triphosphates as substrates. The polypeptide is DNA-directed RNA polymerase subunit gamma (Prochlorococcus marinus (strain MIT 9313)).